A 158-amino-acid polypeptide reads, in one-letter code: Rhombotin-2 (158 aa).

LIM zinc-binding domains are found at residues 30–89 (CGGC…RLFG) and 94–153 (CASC…EWTK).

Interacts via its LIM domains with ELF2 and LDB1. Also interacts with basic helix-loop-helix protein TAL1/SCL and can assemble in a complex with LMO2 and TAL1/SCL. Interacts with BEX2 and KDM5A.

It is found in the nucleus. Functionally, acts with TAL1/SCL to regulate red blood cell development. Also acts with LDB1 to maintain erythroid precursors in an immature state. This is Rhombotin-2 (LMO2) from Homo sapiens (Human).